The following is a 425-amino-acid chain: 2-methylserine hydroxymethyltransferase (425 aa).

(6S)-5,6,7,8-tetrahydrofolate contacts are provided by residues Leu126 and 130–132 (GHL). At Lys235 the chain carries N6-(pyridoxal phosphate)lysine.

This sequence belongs to the SHMT family. Homodimer. Requires pyridoxal 5'-phosphate as cofactor.

It localises to the cytoplasm. The catalysed reaction is (6R)-5,10-methylene-5,6,7,8-tetrahydrofolate + D-alanine + H2O = 2-methylserine + (6S)-5,6,7,8-tetrahydrofolate. Its pathway is one-carbon metabolism; tetrahydrofolate interconversion. Functionally, catalyzes the reversible interconversion of alpha-methyl-L-serine to D-alanine with tetrahydrofolate (THF) serving as the one-carbon carrier. Cannot use alpha-methyl-D-serine, L-serine, D-serine or L-alanine. In Aminobacter sp, this protein is 2-methylserine hydroxymethyltransferase.